The chain runs to 123 residues: Putative iron-sulfur cluster insertion protein ErpA (123 aa).

Iron-sulfur cluster is bound by residues C51, C115, and C117.

The protein belongs to the HesB/IscA family. As to quaternary structure, homodimer. It depends on iron-sulfur cluster as a cofactor.

Functionally, required for insertion of 4Fe-4S clusters. This chain is Putative iron-sulfur cluster insertion protein ErpA, found in Bordetella bronchiseptica (strain ATCC BAA-588 / NCTC 13252 / RB50) (Alcaligenes bronchisepticus).